We begin with the raw amino-acid sequence, 522 residues long: DNA-binding protein Ikaros (522 aa).

2 disordered regions span residues 1–48 and 96–115; these read MEME…HNNR and AKVNGSHAGGPDSKGPYSSA. 4 consecutive C2H2-type zinc fingers follow at residues 125 to 147, 153 to 175, 181 to 203, and 209 to 232; these read LKCDICGIVCIGPNVLMVHKRSH, FQCTQCGASFTQKGNLLRHIKLH, FKCHLCNYACRRRDALSGHLRTH, and HKCAYCGRSYKQRSSLEEHKERCH. Positions 379–406 are disordered; the sequence is KSASSEKDGSPSHSGQDSTDTESNNEEK. 2 consecutive C2H2-type zinc fingers follow at residues 468–490 and 496–520; these read YRCEHCRILFLDHVMYTIHMGCH and FECNLCGHRSQDRYEFSSHMTRGEH.

This sequence belongs to the Ikaros C2H2-type zinc-finger protein family. In terms of tissue distribution, expression mainly limited to thymus, spleen and pronephros. Very low expression in liver. No expression in testis, brain, eye and muscle.

Its subcellular location is the nucleus. Its function is as follows. Binds and activates the enhancer (delta-A element) of the CD3-delta gene. Functions in the specification and the maturation of the T-lymphocyte. Also interacts with a critical control element in the TDT (terminal deoxynucleotidyltransferase) promoter as well as with the promoters for other genes expressed during early stages of B- and T-cell development. Function is isoform-specific and is modulated by dominant-negative inactive isoforms. In Oncorhynchus mykiss (Rainbow trout), this protein is DNA-binding protein Ikaros (ikzf1).